Reading from the N-terminus, the 187-residue chain is Glutathione peroxidase 7 (187 aa).

Residues 1–19 (MVAATVAAAWLLLWAAACA) form the signal peptide. Cysteine 57 is a catalytic residue.

It belongs to the glutathione peroxidase family. As to expression, expressed in esophageal epithelial cells; expression is up-regulated after exposure to acidic bile acids.

Its subcellular location is the secreted. The catalysed reaction is 2 glutathione + H2O2 = glutathione disulfide + 2 H2O. Its function is as follows. It protects esophageal epithelia from hydrogen peroxide-induced oxidative stress. It suppresses acidic bile acid-induced reactive oxygen species (ROS) and protects against oxidative DNA damage and double-strand breaks. The sequence is that of Glutathione peroxidase 7 (GPX7) from Homo sapiens (Human).